Consider the following 297-residue polypeptide: Phosphatidylserine decarboxylase proenzyme (297 aa).

Active-site charge relay system; for autoendoproteolytic cleavage activity residues include Asp-90, His-147, and Ser-252. The active-site Schiff-base intermediate with substrate; via pyruvic acid; for decarboxylase activity is the Ser-252. Ser-252 is subject to Pyruvic acid (Ser); by autocatalysis.

It belongs to the phosphatidylserine decarboxylase family. PSD-B subfamily. Prokaryotic type I sub-subfamily. As to quaternary structure, heterodimer of a large membrane-associated beta subunit and a small pyruvoyl-containing alpha subunit. Pyruvate serves as cofactor. Post-translationally, is synthesized initially as an inactive proenzyme. Formation of the active enzyme involves a self-maturation process in which the active site pyruvoyl group is generated from an internal serine residue via an autocatalytic post-translational modification. Two non-identical subunits are generated from the proenzyme in this reaction, and the pyruvate is formed at the N-terminus of the alpha chain, which is derived from the carboxyl end of the proenzyme. The autoendoproteolytic cleavage occurs by a canonical serine protease mechanism, in which the side chain hydroxyl group of the serine supplies its oxygen atom to form the C-terminus of the beta chain, while the remainder of the serine residue undergoes an oxidative deamination to produce ammonia and the pyruvoyl prosthetic group on the alpha chain. During this reaction, the Ser that is part of the protease active site of the proenzyme becomes the pyruvoyl prosthetic group, which constitutes an essential element of the active site of the mature decarboxylase.

It is found in the cell membrane. It catalyses the reaction a 1,2-diacyl-sn-glycero-3-phospho-L-serine + H(+) = a 1,2-diacyl-sn-glycero-3-phosphoethanolamine + CO2. It participates in phospholipid metabolism; phosphatidylethanolamine biosynthesis; phosphatidylethanolamine from CDP-diacylglycerol: step 2/2. Functionally, catalyzes the formation of phosphatidylethanolamine (PtdEtn) from phosphatidylserine (PtdSer). In Stutzerimonas stutzeri (strain A1501) (Pseudomonas stutzeri), this protein is Phosphatidylserine decarboxylase proenzyme.